Here is a 230-residue protein sequence, read N- to C-terminus: uncharacterized protein (230 aa).

A run of 6 helical transmembrane segments spans residues 4 to 24, 30 to 50, 67 to 87, 91 to 111, 148 to 168, and 210 to 230; these read ACIAIIIILLTVAAYLAMVKL, LPFLIPVLTTTILIVAALMMF, LLGPAVVALAYPLYKQWHIIV, VPILGGVLVGLCMGMISGLIF, MTVVFVMIAGFSGVILGPLFL, and MTLCAVLGSFFGPLVVWLFHI.

The protein belongs to the YohK (E.coli)/YwbG (IPA-22R) (B.subtilis) family.

It localises to the cell membrane. This is an uncharacterized protein from Bacillus subtilis (strain 168).